Consider the following 201-residue polypeptide: Protein GrpE (201 aa).

Polar residues predominate over residues methionine 1–serine 11. Residues methionine 1 to aspartate 40 form a disordered region.

Belongs to the GrpE family. As to quaternary structure, homodimer.

It is found in the cytoplasm. In terms of biological role, participates actively in the response to hyperosmotic and heat shock by preventing the aggregation of stress-denatured proteins, in association with DnaK and GrpE. It is the nucleotide exchange factor for DnaK and may function as a thermosensor. Unfolded proteins bind initially to DnaJ; upon interaction with the DnaJ-bound protein, DnaK hydrolyzes its bound ATP, resulting in the formation of a stable complex. GrpE releases ADP from DnaK; ATP binding to DnaK triggers the release of the substrate protein, thus completing the reaction cycle. Several rounds of ATP-dependent interactions between DnaJ, DnaK and GrpE are required for fully efficient folding. The polypeptide is Protein GrpE (Beijerinckia indica subsp. indica (strain ATCC 9039 / DSM 1715 / NCIMB 8712)).